Consider the following 530-residue polypeptide: Carbohydrate sulfotransferase 2 (530 aa).

A disordered region spans residues 1 to 20 (MSRSSPRALPPGALPRPLPA). Residues 1–54 (MSRSSPRALPPGALPRPLPAAPAAVQRALLPPWPRRAGRRWPASPLGMKVFRRK) lie on the Cytoplasmic side of the membrane. The segment covering 8 to 20 (ALPPGALPRPLPA) has biased composition (pro residues). Residues 55–75 (ALVLCAGYALLLVLTMLNLLD) traverse the membrane as a helical; Signal-anchor for type II membrane protein segment. Topologically, residues 76-530 (YKWHKEPLQQ…SKTLLRKPRL (455 aa)) are lumenal. Residues 97–128 (GAAGAGWGRPGSPPAAPPRAHSRMDPRTPYRP) form a disordered region. 173 to 179 (WRSGSSF) provides a ligand contact to 3'-phosphoadenylyl sulfate. The N-linked (GlcNAc...) asparagine glycan is linked to asparagine 243. 332-340 (RDPRAVASS) contacts 3'-phosphoadenylyl sulfate. N-linked (GlcNAc...) asparagine glycosylation is found at asparagine 457 and asparagine 475.

The protein belongs to the sulfotransferase 1 family. Gal/GlcNAc/GalNAc subfamily. Homodimer; disulfide-linked. Homodimerization is not essential for enzyme activity. In terms of tissue distribution, in brain, it is expressed in pyramidal cells in the CA3 subregion of the hippocampus, cerebellar nucleus and Purkinje cells. Expressed in peripheral lymph nodes.

The protein resides in the golgi apparatus. The protein localises to the trans-Golgi network membrane. The enzyme catalyses 3-O-{N-acetyl-beta-D-glucosaminyl-(1-&gt;3)-beta-D-galactosyl-(1-&gt;3)-N-acetyl-alpha-D-galactosaminyl}-L-threonyl-[protein] + 3'-phosphoadenylyl sulfate = 3-O-{6-O-sulfo-N-acetyl-beta-D-glucosaminyl-(1-&gt;3)-beta-D-galactosyl-(1-&gt;3)-N-acetyl-alpha-D-galactosaminyl}-L-threonyl-[protein] + adenosine 3',5'-bisphosphate + H(+). It catalyses the reaction 3-O-{N-acetyl-beta-D-glucosaminyl-(1-&gt;3)-beta-D-galactosyl-(1-&gt;3)-N-acetyl-alpha-D-galactosaminyl}-L-seryl-[protein] + 3'-phosphoadenylyl sulfate = 3-O-{6-O-sulfo-N-acetyl-beta-D-glucosaminyl-(1-&gt;3)-beta-D-galactosyl-(1-&gt;3)-N-acetyl-alpha-D-galactosaminyl}-L-seryl-[protein] + adenosine 3',5'-bisphosphate + H(+). It carries out the reaction a 3-O-{beta-D-galactosyl-(1-&gt;3)-[N-acetyl-beta-D-glucosaminyl-(1-&gt;6)]-N-acetyl-alpha-D-galactosaminyl}-L-threonyl-[protein] + 3'-phosphoadenylyl sulfate = 3-O-{beta-D-galactosyl-(1-&gt;3)-[6-O-sulfo-N-acetyl-beta-D-glucosaminyl-(1-&gt;6)]-N-acetyl-alpha-D-galactosaminyl}-L-threonyl-[protein] + adenosine 3',5'-bisphosphate + H(+). The catalysed reaction is 3-O-{beta-D-galactosyl-(1-&gt;3)-[N-acetyl-beta-D-glucosaminyl-(1-&gt;6)]-N-acetyl-alpha-D-galactosaminyl}-L-seryl-[protein] + 3'-phosphoadenylyl sulfate = 3-O-{beta-D-galactosyl-(1-&gt;3)-[6-O-sulfo-N-acetyl-beta-D-glucosaminyl-(1-&gt;6)]-N-acetyl-alpha-D-galactosaminyl}-L-seryl-[protein] + adenosine 3',5'-bisphosphate + H(+). The protein operates within protein modification; carbohydrate sulfation. In terms of biological role, sulfotransferase that utilizes 3'-phospho-5'-adenylyl sulfate (PAPS) as sulfonate donor to catalyze the transfer of sulfate to position 6 of non-reducing N-acetylglucosamine (GlcNAc) residues within keratan-like structures on N-linked glycans and within mucin-associated glycans that can ultimately serve as SELL ligands. SELL ligands are present in high endothelial cells (HEVs) and play a central role in lymphocyte homing at sites of inflammation. Participates in biosynthesis of the SELL ligand sialyl 6-sulfo Lewis X and in lymphocyte homing to Peyer patches. Has no activity toward O-linked sugars. Its substrate specificity may be influenced by its subcellular location. Sulfates GlcNAc residues at terminal, non-reducing ends of oligosaccharide chains. The polypeptide is Carbohydrate sulfotransferase 2 (Chst2) (Mus musculus (Mouse)).